Consider the following 156-residue polypeptide: Transcription elongation factor GreA (156 aa).

The stretch at A2–D78 forms a coiled coil.

This sequence belongs to the GreA/GreB family.

Necessary for efficient RNA polymerase transcription elongation past template-encoded arresting sites. The arresting sites in DNA have the property of trapping a certain fraction of elongating RNA polymerases that pass through, resulting in locked ternary complexes. Cleavage of the nascent transcript by cleavage factors such as GreA or GreB allows the resumption of elongation from the new 3'terminus. GreA releases sequences of 2 to 3 nucleotides. This Mesoplasma florum (strain ATCC 33453 / NBRC 100688 / NCTC 11704 / L1) (Acholeplasma florum) protein is Transcription elongation factor GreA.